Consider the following 423-residue polypeptide: Histidine--tRNA ligase (423 aa).

Belongs to the class-II aminoacyl-tRNA synthetase family. As to quaternary structure, homodimer.

The protein resides in the cytoplasm. It carries out the reaction tRNA(His) + L-histidine + ATP = L-histidyl-tRNA(His) + AMP + diphosphate + H(+). This is Histidine--tRNA ligase from Orientia tsutsugamushi (strain Boryong) (Rickettsia tsutsugamushi).